A 426-amino-acid chain; its full sequence is uncharacterized protein (426 aa).

Residues 23-42 (ENPRPTNNPSTSHPSDSYST) are disordered. The segment covering 26–42 (RPTNNPSTSHPSDSYST) has biased composition (polar residues).

The protein belongs to the serpin family.

This is an uncharacterized protein from Thermococcus kodakarensis (strain ATCC BAA-918 / JCM 12380 / KOD1) (Pyrococcus kodakaraensis (strain KOD1)).